The chain runs to 110 residues: U32-theraphotoxin-Cg1a (110 aa).

An N-terminal signal peptide occupies residues 1–19; it reads MKHCFLILFTLIVFTVVWS. Positions 20–43 are excised as a propeptide; that stretch reads LEENEEYPDEDEMIESFMDGYSYR. Cystine bridges form between Cys-49–Cys-63, Cys-56–Cys-69, Cys-60–Cys-105, and Cys-62–Cys-80.

Belongs to the neurotoxin 03 (Tx2) family. 02 subfamily. In terms of tissue distribution, expressed by the venom gland.

It is found in the secreted. Probable ion channel inhibitor. This chain is U32-theraphotoxin-Cg1a, found in Chilobrachys guangxiensis (Chinese earth tiger tarantula).